The following is a 337-amino-acid chain: Terpene synthase 4 (337 aa).

2 residues coordinate Mg(2+): Asp94 and Asp98. The D(D/E)XX(D/E) motif signature appears at 94-98; the sequence is DDIFD. Arg195 serves as a coordination point for substrate. Residues Asn241, Ser245, and Glu249 each contribute to the Mg(2+) site. The NSE motif signature appears at 241-249; it reads NDIYSYHRE. The short motif at 320–327 is the WxxxxxRY motif element; the sequence is WSESCTRY.

It belongs to the terpene synthase family. Requires Mg(2+) as cofactor.

It carries out the reaction (2E,6E)-farnesyl diphosphate = alpha-muurolene + diphosphate. The catalysed reaction is (2E,6E)-farnesyl diphosphate = (-)-(E)-beta-caryophyllene + diphosphate. In terms of biological role, terpene synthase that catalyzes the cyclization of farnesyl diphosphate (FPP) into alpha-muurolene, (-)-beta-caryophyllene, and one unidentified sesquiterpene. TPS4 shows only trace monoterpene synthase activity with geranyl diphosphate (GPP) as substrate and produces very small amounts of myrcene. P.polycephalum has a unique biology and these volatile terpenoids could function in internal communication of P.polycephalum, to mark the territory that have been explored, or they may be involved in chemotaxis. This is Terpene synthase 4 from Physarum polycephalum (Slime mold).